We begin with the raw amino-acid sequence, 567 residues long: Urease subunit alpha (567 aa).

Residues 129-567 (GGIDAHIHFI…LPLTQRYCLF (439 aa)) form the Urease domain. Residues H134, H136, and K217 each coordinate Ni(2+). K217 is modified (N6-carboxylysine). Residue H219 coordinates substrate. Residues H246 and H272 each contribute to the Ni(2+) site. Catalysis depends on H320, which acts as the Proton donor. D360 lines the Ni(2+) pocket.

This sequence belongs to the metallo-dependent hydrolases superfamily. Urease alpha subunit family. In terms of assembly, heterotrimer of UreA (gamma), UreB (beta) and UreC (alpha) subunits. Three heterotrimers associate to form the active enzyme. Requires Ni cation as cofactor. In terms of processing, carboxylation allows a single lysine to coordinate two nickel ions.

It is found in the cytoplasm. It carries out the reaction urea + 2 H2O + H(+) = hydrogencarbonate + 2 NH4(+). It participates in nitrogen metabolism; urea degradation; CO(2) and NH(3) from urea (urease route): step 1/1. The polypeptide is Urease subunit alpha (Psychromonas ingrahamii (strain DSM 17664 / CCUG 51855 / 37)).